A 138-amino-acid chain; its full sequence is Probable prefoldin subunit 4 (138 aa).

Belongs to the prefoldin subunit beta family. In terms of assembly, heterohexamer of two PFD-alpha type and four PFD-beta type subunits.

In terms of biological role, binds specifically to cytosolic chaperonin (c-CPN) and transfers target proteins to it. Binds to nascent polypeptide chain and promotes folding in an environment in which there are many competing pathways for nonnative proteins. This chain is Probable prefoldin subunit 4, found in Drosophila melanogaster (Fruit fly).